The chain runs to 222 residues: Phosphoribosylformylglycinamidine synthase subunit PurQ (222 aa).

One can recognise a Glutamine amidotransferase type-1 domain in the interval 2–222 (SVAIVRFPGT…DNLLHIAEMK (221 aa)). The active-site Nucleophile is Cys-86. Catalysis depends on residues His-194 and Glu-196.

Part of the FGAM synthase complex composed of 1 PurL, 1 PurQ and 2 PurS subunits.

The protein resides in the cytoplasm. It catalyses the reaction N(2)-formyl-N(1)-(5-phospho-beta-D-ribosyl)glycinamide + L-glutamine + ATP + H2O = 2-formamido-N(1)-(5-O-phospho-beta-D-ribosyl)acetamidine + L-glutamate + ADP + phosphate + H(+). It carries out the reaction L-glutamine + H2O = L-glutamate + NH4(+). Its pathway is purine metabolism; IMP biosynthesis via de novo pathway; 5-amino-1-(5-phospho-D-ribosyl)imidazole from N(2)-formyl-N(1)-(5-phospho-D-ribosyl)glycinamide: step 1/2. Part of the phosphoribosylformylglycinamidine synthase complex involved in the purines biosynthetic pathway. Catalyzes the ATP-dependent conversion of formylglycinamide ribonucleotide (FGAR) and glutamine to yield formylglycinamidine ribonucleotide (FGAM) and glutamate. The FGAM synthase complex is composed of three subunits. PurQ produces an ammonia molecule by converting glutamine to glutamate. PurL transfers the ammonia molecule to FGAR to form FGAM in an ATP-dependent manner. PurS interacts with PurQ and PurL and is thought to assist in the transfer of the ammonia molecule from PurQ to PurL. The chain is Phosphoribosylformylglycinamidine synthase subunit PurQ from Helicobacter hepaticus (strain ATCC 51449 / 3B1).